We begin with the raw amino-acid sequence, 370 residues long: MPYNGIDNYRHNEPDRLGVLITNLGTPDAPTTPALRKYLAEFLWDPRVVEVPRPLWWLILHGVILRIRPRKSAEAYASVWEKDGSPLLIHTAKQAEGIREAMKQRFGTNVVVGFAMRYGNPSIPRVLEEMQQQGVRKLLILPLYPQYSASTTASTFDAISKDFTRRRWLPDFRFISHYHDFPPYIEAMARHIESHWAEHGRKEKLILSYHGVPLKYLLKGDPYHCECHKTSRLLAERLGLGKDQYMTTFQSRFGREEWLQPYTDETLKALPGKGVKSIDVFCPGFSADCLETIEEINEENREYFMESGGEGFSYIPCLNATPGHIDALVQLVEDNLQGWDIPENTPESLEQRATLAEERKQATFPGRSDI.

Residues His210 and Glu291 each contribute to the Fe cation site.

This sequence belongs to the ferrochelatase family.

Its subcellular location is the cytoplasm. The catalysed reaction is heme b + 2 H(+) = protoporphyrin IX + Fe(2+). It functions in the pathway porphyrin-containing compound metabolism; protoheme biosynthesis; protoheme from protoporphyrin-IX: step 1/1. In terms of biological role, catalyzes the ferrous insertion into protoporphyrin IX. This chain is Ferrochelatase, found in Marinobacter nauticus (strain ATCC 700491 / DSM 11845 / VT8) (Marinobacter aquaeolei).